Here is a 743-residue protein sequence, read N- to C-terminus: Phosphoribosylformylglycinamidine synthase subunit PurL (743 aa).

The active site involves histidine 50. ATP is bound by residues tyrosine 53 and lysine 92. Glutamate 94 is a binding site for Mg(2+). Substrate contacts are provided by residues 95 to 98 (SHNH) and arginine 117. Histidine 96 acts as the Proton acceptor in catalysis. A Mg(2+)-binding site is contributed by aspartate 118. Glutamine 241 is a substrate binding site. Residue aspartate 269 participates in Mg(2+) binding. Position 313 to 315 (313 to 315 (ESQ)) interacts with substrate. ATP is bound by residues aspartate 495 and glycine 532. A Mg(2+)-binding site is contributed by asparagine 533. Serine 535 contributes to the substrate binding site.

This sequence belongs to the FGAMS family. Monomer. Part of the FGAM synthase complex composed of 1 PurL, 1 PurQ and 2 PurS subunits.

It is found in the cytoplasm. It carries out the reaction N(2)-formyl-N(1)-(5-phospho-beta-D-ribosyl)glycinamide + L-glutamine + ATP + H2O = 2-formamido-N(1)-(5-O-phospho-beta-D-ribosyl)acetamidine + L-glutamate + ADP + phosphate + H(+). The protein operates within purine metabolism; IMP biosynthesis via de novo pathway; 5-amino-1-(5-phospho-D-ribosyl)imidazole from N(2)-formyl-N(1)-(5-phospho-D-ribosyl)glycinamide: step 1/2. Part of the phosphoribosylformylglycinamidine synthase complex involved in the purines biosynthetic pathway. Catalyzes the ATP-dependent conversion of formylglycinamide ribonucleotide (FGAR) and glutamine to yield formylglycinamidine ribonucleotide (FGAM) and glutamate. The FGAM synthase complex is composed of three subunits. PurQ produces an ammonia molecule by converting glutamine to glutamate. PurL transfers the ammonia molecule to FGAR to form FGAM in an ATP-dependent manner. PurS interacts with PurQ and PurL and is thought to assist in the transfer of the ammonia molecule from PurQ to PurL. This chain is Phosphoribosylformylglycinamidine synthase subunit PurL, found in Rhizobium etli (strain CIAT 652).